We begin with the raw amino-acid sequence, 209 residues long: NADH-ubiquinone oxidoreductase subunit 9 (209 aa).

It belongs to the complex I 30 kDa subunit family. Complex I is composed of about 30 different subunits.

It localises to the mitochondrion inner membrane. The catalysed reaction is a ubiquinone + NADH + 5 H(+)(in) = a ubiquinol + NAD(+) + 4 H(+)(out). In terms of biological role, core subunit of the mitochondrial membrane respiratory chain NADH dehydrogenase (Complex I) that is believed to belong to the minimal assembly required for catalysis. Complex I functions in the transfer of electrons from NADH to the respiratory chain. The immediate electron acceptor for the enzyme is believed to be ubiquinone. The protein is NADH-ubiquinone oxidoreductase subunit 9 (nad9) of Dictyostelium citrinum (Slime mold).